Reading from the N-terminus, the 134-residue chain is Transmembrane protein 100 (134 aa).

The disordered stretch occupies residues 1 to 24 (MTEEPTKENLGGPKSPTPVTMEKS). S15 is subject to Phosphoserine. 2 consecutive transmembrane segments (helical) span residues 56–76 (CIIP…AVAY) and 84–104 (VISI…ASSA). At S121 the chain carries Phosphoserine.

As to quaternary structure, interacts (via C-terminus) with TRPA1 and TRPV1. Interacts with TASOR.

It localises to the cell membrane. The protein localises to the membrane. It is found in the perikaryon. The protein resides in the cytoplasm. Its subcellular location is the perinuclear region. It localises to the endoplasmic reticulum. Its function is as follows. Plays a role during embryonic arterial endothelium differentiation and vascular morphogenesis through the ACVRL1 receptor-dependent signaling pathway upon stimulation by bone morphogenetic proteins, such as GDF2/BMP9 and BMP10. Involved in the regulation of nociception, acting as a modulator of the interaction between TRPA1 and TRPV1, two molecular sensors and mediators of pain signals in dorsal root ganglia (DRG) neurons. Mechanistically, it weakens their interaction, thereby releasing the inhibition of TRPA1 by TRPV1 and increasing the single-channel open probability of the TRPA1-TRPV1 complex. The protein is Transmembrane protein 100 (Tmem100) of Rattus norvegicus (Rat).